A 517-amino-acid chain; its full sequence is Crotonobetaine/carnitine--CoA ligase (517 aa).

The protein belongs to the ATP-dependent AMP-binding enzyme family.

The catalysed reaction is 4-(trimethylamino)butanoate + ATP + CoA = 4-(trimethylamino)butanoyl-CoA + AMP + diphosphate. The enzyme catalyses crotonobetaine + ATP + CoA = crotonobetainyl-CoA + AMP + diphosphate. It catalyses the reaction (R)-carnitine + ATP + CoA = (R)-carnitinyl-CoA + AMP + diphosphate. It participates in amine and polyamine metabolism; carnitine metabolism. In terms of biological role, catalyzes the transfer of CoA to carnitine, generating the initial carnitinyl-CoA needed for the CaiB reaction cycle. Also has activity toward crotonobetaine and gamma-butyrobetaine. This Escherichia fergusonii (strain ATCC 35469 / DSM 13698 / CCUG 18766 / IAM 14443 / JCM 21226 / LMG 7866 / NBRC 102419 / NCTC 12128 / CDC 0568-73) protein is Crotonobetaine/carnitine--CoA ligase.